The primary structure comprises 319 residues: Ribosomal RNA small subunit methyltransferase H (319 aa).

S-adenosyl-L-methionine contacts are provided by residues Gly34 to His36, Asp54, Phe83, Asp104, and Gln111.

The protein belongs to the methyltransferase superfamily. RsmH family.

It localises to the cytoplasm. It carries out the reaction cytidine(1402) in 16S rRNA + S-adenosyl-L-methionine = N(4)-methylcytidine(1402) in 16S rRNA + S-adenosyl-L-homocysteine + H(+). Functionally, specifically methylates the N4 position of cytidine in position 1402 (C1402) of 16S rRNA. The polypeptide is Ribosomal RNA small subunit methyltransferase H (Lactiplantibacillus plantarum (strain ATCC BAA-793 / NCIMB 8826 / WCFS1) (Lactobacillus plantarum)).